We begin with the raw amino-acid sequence, 663 residues long: Methionine--tRNA ligase (663 aa).

The short motif at 10–20 is the 'HIGH' region element; sequence AYTNGPLHLGH. Zn(2+)-binding residues include C142, C145, C154, and C157. The 'KMSKS' region signature appears at 323 to 327; sequence KMSTS. Residue T326 participates in ATP binding. The 101-residue stretch at 563-663 folds into the tRNA-binding domain; it reads YFGNVDLRVG…RDLPVGSKIH (101 aa).

It belongs to the class-I aminoacyl-tRNA synthetase family. MetG type 1 subfamily. As to quaternary structure, homodimer. Zn(2+) is required as a cofactor.

Its subcellular location is the cytoplasm. It carries out the reaction tRNA(Met) + L-methionine + ATP = L-methionyl-tRNA(Met) + AMP + diphosphate. Functionally, is required not only for elongation of protein synthesis but also for the initiation of all mRNA translation through initiator tRNA(fMet) aminoacylation. The polypeptide is Methionine--tRNA ligase (Methanococcus maripaludis (strain C7 / ATCC BAA-1331)).